A 582-amino-acid polypeptide reads, in one-letter code: BTB/POZ domain and ankyrin repeat-containing protein NPR1 (582 aa).

Residues 1 to 12 (MEPPTSHVTNAF) show a composition bias toward polar residues. Positions 1–27 (MEPPTSHVTNAFSDSDSASVEEGDADA) are disordered. In terms of domain architecture, BTB spans 55–140 (ADARIAVPGG…VLDYLYSGRV (86 aa)). The C2HC NPR-type zinc-finger motif lies at 147–161 (ACLCVDEDCAHVGCH). Zn(2+) is bound by residues C150, C155, H157, and C160. 4 ANK repeats span residues 229–258 (RSNL…SLGL), 269–299 (KHVR…NLDD), 301–328 (FALH…DVNH), and 332–361 (RGYT…RPAD). The tract at residues 391-526 (PSPKDRLCIE…VLDKIMDDET (136 aa)) is salicylic acid-binding core (SBC). R436 lines the salicylate pocket. 2 disordered regions span residues 525–544 (ETDP…KRFH) and 551–582 (QKAF…RPRR). Residues 553–563 (AFHEDKEENDR) are compositionally biased toward basic and acidic residues. Residues 564–574 (SGLSSSSSSTS) are compositionally biased toward low complexity.

It belongs to the plant 'ANKYRIN-BTB/POZ' family. 'NPR1-like' subfamily. As to quaternary structure, oligomer in an uninduced state; disulfide-linked. Forms activated monomer upon changes in cellular redox potential. Interacts with TGA2.2. Interacts with NRR.

Its subcellular location is the cytoplasm. The protein localises to the nucleus. It is found in the nuclear body. It functions in the pathway protein modification; protein ubiquitination. Its function is as follows. Salicylic acid (SA)-binding substrate-specific adapter of an E3 ubiquitin-protein ligase complex (CUL3-RBX1-BTB) which mediates the ubiquitination and subsequent proteasomal degradation of target proteins. Transcription cofactor that represses gene expression in the absence of salicylic acid (SA), when attached to negative cis-elements (W-box) with WRKY transcription factors, but stimulates gene expression upon activation by SA, when sumoylated and attached to positive cis-elements (as-1) with TGA transcription factors, thus confering immunity through a series of gene regulations ending in a significant increase in antimicrobial and defense genes expression. Key positive factor of disease resistance. Involved in defense response against the bacterial blight disease caused by Xanthomonas oryzae pv. oryzae (Xoo). Plants over-expressing NPR1/NH1 acquire high levels of resistance to Xoo, express constitutively defense genes and develop lesion-mimic spots on leaves at pre-flowering stage. Involved in basal resistance to the blast pathogen Magnaporthe oryzae. Plants over-expressing NPR1/NH1 have increased resistance to M.oryzae infection. Plays an essential role in benzothiadiazole (BTH)-induced resistance to the blast fungus disease caused by Magnaporthe oryzae. Functions as a transcriptional coactivator of TGA2.1 and LG2 in vitro. Involved in defense response against herbivore. Plants silencing NPR1/NH1 have increased herbivore-induced trypsin proteinase inhibitors and volatiles, which reduces the performance of the striped stem borer (SSB) Chilo suppressalis. In Oryza sativa subsp. indica (Rice), this protein is BTB/POZ domain and ankyrin repeat-containing protein NPR1.